The following is a 63-amino-acid chain: Progonadoliberin-1 (63 aa).

Glutamine 1 carries the pyrrolidone carboxylic acid modification. The residue at position 10 (glycine 10) is a Glycine amide.

This sequence belongs to the GnRH family. The precursor is cleaved by ACE, which removes the Gly-Lys-Arg peptide at the C-terminus, leading to mature hormone. The mature form of Gonadoliberin-1 is also cleaved and degraded by ACE.

It is found in the secreted. Functionally, stimulates the secretion of gonadotropins; it stimulates the secretion of both luteinizing and follicle-stimulating hormones. This chain is Progonadoliberin-1 (GNRH1), found in Mesocricetus auratus (Golden hamster).